Consider the following 398-residue polypeptide: Phosphoglycerate kinase (398 aa).

Substrate contacts are provided by residues 21–23 (DFN), Arg-36, 59–62 (HLGR), Arg-119, and Arg-157. ATP-binding positions include Lys-208, Gly-296, Glu-327, and 354–357 (GGDS).

It belongs to the phosphoglycerate kinase family. Monomer.

The protein resides in the cytoplasm. The enzyme catalyses (2R)-3-phosphoglycerate + ATP = (2R)-3-phospho-glyceroyl phosphate + ADP. Its pathway is carbohydrate degradation; glycolysis; pyruvate from D-glyceraldehyde 3-phosphate: step 2/5. In Streptococcus pneumoniae (strain 70585), this protein is Phosphoglycerate kinase.